The sequence spans 145 residues: MAFFTGLWGPFTCVSRVLSHHCFSTTGSLSAIQKMTRVRVVDNSALGNSPYHRAPRCIHVYKKNGVGKVGDQILLAIKGQKKKALIVGHCMPGPRMTPRFDSNNVVLIEDNGNPVGTRIKTPIPTSLRKREGEYSKVLAIAQNFV.

A mitochondrion-targeting transit peptide spans Met1–Ser30.

It belongs to the universal ribosomal protein uL14 family. In terms of assembly, component of the mitochondrial large ribosomal subunit (mt-LSU). Mature mammalian 55S mitochondrial ribosomes consist of a small (28S) and a large (39S) subunit. The 28S small subunit contains a 12S ribosomal RNA (12S mt-rRNA) and 30 different proteins. The 39S large subunit contains a 16S rRNA (16S mt-rRNA), a copy of mitochondrial valine transfer RNA (mt-tRNA(Val)), which plays an integral structural role, and 52 different proteins. Interacts with MALSU1.

It is found in the mitochondrion. Its function is as follows. Forms part of 2 intersubunit bridges in the assembled ribosome. Upon binding to MALSU1 intersubunit bridge formation is blocked, preventing ribosome formation and repressing translation. The sequence is that of Large ribosomal subunit protein uL14m (MRPL14) from Homo sapiens (Human).